The chain runs to 638 residues: Zinc finger and BTB domain-containing protein 22 (638 aa).

The BTB domain occupies 57-121 (CDVSIRVQGR…AYTGRLSMAA (65 aa)). Disordered stretches follow at residues 171 to 223 (CASV…STSQ), 229 to 248 (SAAG…APVV), 335 to 354 (DDED…GEPE), and 367 to 451 (EPAD…HGAV). Over residues 189 to 210 (SVRSHTSSRASENQSPSSSNYF) the composition is skewed to polar residues. Ser203 carries the phosphoserine modification. A C2H2-type 1; atypical zinc finger spans residues 483–504 (FLCHCGKAFSHKSMRDRHVNMH). 2 C2H2-type zinc fingers span residues 510–532 (FDCP…MKTH) and 538–559 (YECS…HRGH). The segment at 564 to 638 (HRMGVGGVGS…DFSGGGGAAH (75 aa)) is disordered.

This sequence belongs to the krueppel C2H2-type zinc-finger protein family.

Its subcellular location is the nucleus. In terms of biological role, may be involved in transcriptional regulation. The chain is Zinc finger and BTB domain-containing protein 22 (Zbtb22) from Mus musculus (Mouse).